Consider the following 670-residue polypeptide: DNA ligase (670 aa).

NAD(+) is bound by residues 33–37 (DAEFD), 82–83 (SL), and E113. K115 acts as the N6-AMP-lysine intermediate in catalysis. NAD(+)-binding residues include R136, E170, K285, and K309. Zn(2+)-binding residues include C403, C406, C421, and C427. One can recognise a BRCT domain in the interval 587–670 (EQNLYLSGKT…EVLKAGDNNG (84 aa)).

The protein belongs to the NAD-dependent DNA ligase family. LigA subfamily. Mg(2+) serves as cofactor. Mn(2+) is required as a cofactor.

The enzyme catalyses NAD(+) + (deoxyribonucleotide)n-3'-hydroxyl + 5'-phospho-(deoxyribonucleotide)m = (deoxyribonucleotide)n+m + AMP + beta-nicotinamide D-nucleotide.. DNA ligase that catalyzes the formation of phosphodiester linkages between 5'-phosphoryl and 3'-hydroxyl groups in double-stranded DNA using NAD as a coenzyme and as the energy source for the reaction. It is essential for DNA replication and repair of damaged DNA. This Halothermothrix orenii (strain H 168 / OCM 544 / DSM 9562) protein is DNA ligase.